A 445-amino-acid chain; its full sequence is mRNA cleavage and polyadenylation factor CLP1 (445 aa).

ATP-binding positions include aspartate 33, lysine 72, and 133–138; that span reads QTGKTS.

This sequence belongs to the Clp1 family. Clp1 subfamily. In terms of assembly, component of the cleavage factor IA (CF IA) complex, which is a heterohexameric complex with 2:2:1:1 stoichiometry of RNA14, RNA15, PCF11 and CLP1. It contains 2 copies of an RNA14-RNA15 dimer and 1 copy of CLP1-PCF11. The complex interacts with the cleavage factor HRB1/CF IB to form the cleavage factor I (CF I) complex, and binds to RNA. Interacts directly with PCF11. Interacts with the CPF components CFT1, PTA1, PFS2, YSH1 and SSU72.

Its subcellular location is the nucleus. Component of the cleavage factor IA (CF IA) complex, which is involved in the endonucleolytic cleavage during polyadenylation-dependent pre-mRNA 3'-end formation. Associates with HRB1/CF IB to form the cleavage factor I (CF I) complex. CF I is required for correct positioning of a larger protein complex, the cleavage and polyadenylation factor (CPF) complex, which contains the catalytic subunits executing mRNA cleavage and polyadenylation. CLP1 mediates interactions between CF IA and CPF factors. CLP1 is also involved in maintaining the CF IA interaction with the C-terminal domain of RNA Pol II largest subunit via PCF11, which links pre-mRNA 3'-end processing to transcription termination. In Saccharomyces cerevisiae (strain YJM789) (Baker's yeast), this protein is mRNA cleavage and polyadenylation factor CLP1.